The chain runs to 150 residues: Macrodomain Ter protein (150 aa).

The protein belongs to the MatP family. In terms of assembly, homodimer.

It is found in the cytoplasm. Its function is as follows. Required for spatial organization of the terminus region of the chromosome (Ter macrodomain) during the cell cycle. Prevents early segregation of duplicated Ter macrodomains during cell division. Binds specifically to matS, which is a 13 bp signature motif repeated within the Ter macrodomain. In Salmonella typhi, this protein is Macrodomain Ter protein.